The following is a 261-amino-acid chain: MPQNEYIERAQKLHGKRLDTEERARKKAAREGHKQSENAQNLRGLRAKLFAKERHAQKIQMRKAIKQHEERNVKGAPEEKDPSNPVPAYLLDRSNPTSAKALSSQIKSKRAEKAARFSVPIPKVKGISEEELFKVVKTGKKVHKKGWKRVVTKPTFVGPDFTRRPVKYERFIRPMGLRYKKANVTHPTLNVTVQLPILGVKKNPSNPLYTQLGVLSKGTIIEVNVSDLGMVTASGKIAWGRYAQITNNPENDGCLNAVLLV.

Basic and acidic residues-rich tracts occupy residues 1 to 36 (MPQNEYIERAQKLHGKRLDTEERARKKAAREGHKQS) and 66 to 82 (KQHEERNVKGAPEEKDP). Disordered regions lie at residues 1–44 (MPQN…NLRG) and 64–97 (AIKQHEERNVKGAPEEKDPSNPVPAYLLDRSNPT). Positions 15-22 (GKRLDTEE) match the Nuclear localization signal motif.

Belongs to the eukaryotic ribosomal protein eS8 family. Ribosome biogenesis protein NSA2 subfamily. In terms of assembly, component of the pre-66S ribosomal particle. Interacts with nop7 and rrp1. Interacts with rsa4 (via WD repeats).

The protein localises to the nucleus. The protein resides in the nucleolus. Functionally, involved in the biogenesis of the 60S ribosomal subunit. May play a part in the quality control of pre-60S particles. The polypeptide is Ribosome biogenesis protein nsa2 (rbg-52) (Neurospora crassa (strain ATCC 24698 / 74-OR23-1A / CBS 708.71 / DSM 1257 / FGSC 987)).